The following is a 187-amino-acid chain: Peptidyl-tRNA hydrolase (187 aa).

Tyr-16 contacts tRNA. Catalysis depends on His-21, which acts as the Proton acceptor. Tyr-66, Asn-68, and Asn-114 together coordinate tRNA.

It belongs to the PTH family. Monomer.

The protein resides in the cytoplasm. The catalysed reaction is an N-acyl-L-alpha-aminoacyl-tRNA + H2O = an N-acyl-L-amino acid + a tRNA + H(+). Hydrolyzes ribosome-free peptidyl-tRNAs (with 1 or more amino acids incorporated), which drop off the ribosome during protein synthesis, or as a result of ribosome stalling. Functionally, catalyzes the release of premature peptidyl moieties from peptidyl-tRNA molecules trapped in stalled 50S ribosomal subunits, and thus maintains levels of free tRNAs and 50S ribosomes. This chain is Peptidyl-tRNA hydrolase, found in Malacoplasma penetrans (strain HF-2) (Mycoplasma penetrans).